Reading from the N-terminus, the 979-residue chain is Protein SMAX1-LIKE 6 (979 aa).

A Clp R domain is found at 8-190 (ARECLTEEAA…PVTQLSSRFS (183 aa)). Repeat stretches follow at residues 12-86 (LTEE…LDRL) and 100-190 (VSNS…SRFS). The short motif at 833 to 837 (LDLNL) is the EAR element.

Belongs to the ClpA/ClpB family. As to quaternary structure, interacts with TPL/TPR in an EAR-motif dependent manner. Interacts with TPR3. Interacts with MAX2 and TPR2. Interacts with D14. The interaction with D14 occurs in the presence of (2'R) stereoisomers of strigolactones, but not (2'S) stereoisomers. Ubiquitinated upon strigolactone treatment. Probable proteolytic target of SCF(MAX2)-mediated stigolactone signaling. In terms of tissue distribution, detected in roots, seedlings and axillary branches. Expressed in the primary rosette buds and expanding leaves of adult rosettes, the vasculature of the hypocotyls, cotyledons, and mature roots, and in the midvein and petioles of young leaves.

The protein resides in the nucleus. In terms of biological role, probable component of a transcriptional corepressor complex involved in branching control. Regulates cotyledon expansion and lateral root growth, but not germination or hypocotyl elongation. Promotes auxin transport and PIN1 accumulation in the stem and represses BRC1/TCP18 expression in axillary buds. This Arabidopsis thaliana (Mouse-ear cress) protein is Protein SMAX1-LIKE 6.